The following is a 120-amino-acid chain: Anti-adapter protein IraM (120 aa).

Belongs to the IraM/RssC family.

Its subcellular location is the cytoplasm. Involved in the stabilization of the sigma stress factor RpoS. In Salmonella choleraesuis (strain SC-B67), this protein is Anti-adapter protein IraM.